The chain runs to 201 residues: Cobalt-precorrin-7 C(5)-methyltransferase (201 aa).

The protein belongs to the precorrin methyltransferase family.

It carries out the reaction Co-precorrin-7 + S-adenosyl-L-methionine = Co-precorrin-8X + S-adenosyl-L-homocysteine + H(+). The protein operates within cofactor biosynthesis; adenosylcobalamin biosynthesis; cob(II)yrinate a,c-diamide from sirohydrochlorin (anaerobic route): step 8/10. Its function is as follows. Catalyzes the methylation of C-5 in cobalt-precorrin-7 to form cobalt-precorrin-8. The protein is Cobalt-precorrin-7 C(5)-methyltransferase (cbiE) of Salmonella typhi.